Consider the following 551-residue polypeptide: Chitinase (551 aa).

Residues 1 to 17 (MLYKLLNVLWLVAVSNA) form the signal peptide. Residues 1 to 149 (MLYKLLNVLW…NKPGRREDKI (149 aa)) form a chitin binding domain (CBD) region. The GH18 domain occupies 148-548 (KIVAAYFVEW…NAINAQFKPK (401 aa)). N-linked (GlcNAc...) asparagine; by host glycosylation occurs at asparagine 173. Glutamate 305 (proton donor) is an active-site residue. Asparagine 444 carries N-linked (GlcNAc...) asparagine; by host glycosylation. The short motif at 548 to 551 (KDEL) is the Prevents secretion from ER element.

The protein belongs to the glycosyl hydrolase 18 family. Chitinase class II subfamily. As to quaternary structure, interacts with host VCATH.

It localises to the host endoplasmic reticulum lumen. It carries out the reaction Random endo-hydrolysis of N-acetyl-beta-D-glucosaminide (1-&gt;4)-beta-linkages in chitin and chitodextrins.. Functionally, plays a role in host liquefaction to facilitate horizontal transmission of the virus by hydrolyzing beta-chitin and by regulating the cysteine protease VCATH. Localized in the host reticulum endoplasmic via its KDEL motif, interacts with and thus prevents VCATH secretion before host cell lysis occurs. The chain is Chitinase (CHIA) from Lepidoptera (butterflies and moths).